The chain runs to 406 residues: Arginine biosynthesis bifunctional protein ArgJ (406 aa).

Residues threonine 156, lysine 182, threonine 193, glutamate 279, asparagine 401, and threonine 406 each coordinate substrate. Threonine 193 (nucleophile) is an active-site residue.

Belongs to the ArgJ family. In terms of assembly, heterotetramer of two alpha and two beta chains.

It localises to the cytoplasm. The catalysed reaction is N(2)-acetyl-L-ornithine + L-glutamate = N-acetyl-L-glutamate + L-ornithine. It carries out the reaction L-glutamate + acetyl-CoA = N-acetyl-L-glutamate + CoA + H(+). Its pathway is amino-acid biosynthesis; L-arginine biosynthesis; L-ornithine and N-acetyl-L-glutamate from L-glutamate and N(2)-acetyl-L-ornithine (cyclic): step 1/1. The protein operates within amino-acid biosynthesis; L-arginine biosynthesis; N(2)-acetyl-L-ornithine from L-glutamate: step 1/4. Functionally, catalyzes two activities which are involved in the cyclic version of arginine biosynthesis: the synthesis of N-acetylglutamate from glutamate and acetyl-CoA as the acetyl donor, and of ornithine by transacetylation between N(2)-acetylornithine and glutamate. This is Arginine biosynthesis bifunctional protein ArgJ from Bacillus licheniformis (strain ATCC 14580 / DSM 13 / JCM 2505 / CCUG 7422 / NBRC 12200 / NCIMB 9375 / NCTC 10341 / NRRL NRS-1264 / Gibson 46).